The sequence spans 314 residues: Olfactory receptor 5P81 (314 aa).

The Extracellular portion of the chain corresponds to 1 to 28 (MAFLEDGNHTVVTEFILLGLTDDPVLRV). The N-linked (GlcNAc...) asparagine glycan is linked to asparagine 8. A helical membrane pass occupies residues 29 to 49 (ILFIIILCIYLVTVSGNLSTI). The Cytoplasmic portion of the chain corresponds to 50–57 (LLIRVSSQ). The chain crosses the membrane as a helical span at residues 58 to 78 (LHHPMYFFLSHLASIDIAISS). Residues 79-102 (SVTPNMVVNFLVERSSISYIGCGI) lie on the Extracellular side of the membrane. Cysteine 100 and cysteine 192 form a disulfide bridge. Residues 103–123 (QLGSAVFFGAIECFLLAVMAY) form a helical membrane-spanning segment. Residues 124–136 (DRFVAICNPLLYS) are Cytoplasmic-facing. A helical membrane pass occupies residues 137 to 157 (TKMSKQVCIQLLVGSYIGGFI). Over 158 to 199 (HASFFTLSFVSFLFCGPNRINHFFCDFTPLVELSCSDNSVLI) the chain is Extracellular. Residues 200-220 (ILDSFSTGTIIVITVFVIAIS) traverse the membrane as a helical segment. At 221 to 240 (YTCILITILKMHSTEGRHKA) the chain is on the cytoplasmic side. A helical membrane pass occupies residues 241–261 (FSTCTSHLTVVTLLYGTVTFI). Topologically, residues 262–274 (YVMPKSSYSTDQN) are extracellular. A helical transmembrane segment spans residues 275–295 (KVISVFYMVVIPMLNPIIYSL). At 296-314 (RNNEIKGALKKQLGEKNIF) the chain is on the cytoplasmic side.

This sequence belongs to the G-protein coupled receptor 1 family.

The protein resides in the cell membrane. Its function is as follows. Potential odorant receptor. The polypeptide is Olfactory receptor 5P81 (Mus musculus (Mouse)).